Here is a 310-residue protein sequence, read N- to C-terminus: tRNA dimethylallyltransferase (310 aa).

24–31 (GPTASGKT) lines the ATP pocket. 26-31 (TASGKT) is a substrate binding site. Positions 49 to 52 (DSRQ) are interaction with substrate tRNA.

The protein belongs to the IPP transferase family. As to quaternary structure, monomer. Mg(2+) serves as cofactor.

It carries out the reaction adenosine(37) in tRNA + dimethylallyl diphosphate = N(6)-dimethylallyladenosine(37) in tRNA + diphosphate. Its function is as follows. Catalyzes the transfer of a dimethylallyl group onto the adenine at position 37 in tRNAs that read codons beginning with uridine, leading to the formation of N6-(dimethylallyl)adenosine (i(6)A). The chain is tRNA dimethylallyltransferase from Synechococcus sp. (strain CC9311).